The sequence spans 450 residues: Protein W (450 aa).

The tract at residues 53-92 (SGESEQVEGGMSKDDGDVERRNLEDLSSTSPTDGTIGKRV) is disordered. The segment covering 63-76 (MSKDDGDVERRNLE) has biased composition (basic and acidic residues). Residue Ser257 is modified to Phosphoserine; by host. The tract at residues 265–324 (ISPEDEEPSSVGGKPNESIGRTIEGQSIRDNLQAKDNKSTDVPGAGPKDSAVKEEPPQKR) is disordered. Residue Ser350 is modified to Phosphoserine; by host. Disordered stretches follow at residues 384–403 (VQTADRQRPGTPMPKSRGIP) and 429–450 (PGMFEDHPPTKKARVSMRRMSN). Positions 438 to 450 (TKKARVSMRRMSN) are enriched in basic residues. The short motif at 439–442 (KKAR) is the Nuclear localization signal element.

Interacts with host STAT1.

The protein localises to the host nucleus. Functionally, prevent the establishment of cellular antiviral state by blocking the interferon-alpha/beta (IFN-alpha/beta). Interacts with host STAT1 protein in the nucleus, blocking it's phosphorylation by IFN-alpha/beta. Also blocks antiviral state induced by Toll-like receptor 3/TLR3 binding to dsRNA. The chain is Protein W (P/V/C) from Cynopterus brachyotis (Lesser short-nosed fruit bat).